A 301-amino-acid polypeptide reads, in one-letter code: Putative MgpC-like protein MPN_093 (301 aa).

This sequence belongs to the MgpC family.

The chain is Putative MgpC-like protein MPN_093 from Mycoplasma pneumoniae (strain ATCC 29342 / M129 / Subtype 1) (Mycoplasmoides pneumoniae).